The sequence spans 521 residues: Glycogen synthase (521 aa).

Lys18 lines the ADP-alpha-D-glucose pocket.

Belongs to the glycosyltransferase 1 family. Bacterial/plant glycogen synthase subfamily.

It catalyses the reaction [(1-&gt;4)-alpha-D-glucosyl](n) + ADP-alpha-D-glucose = [(1-&gt;4)-alpha-D-glucosyl](n+1) + ADP + H(+). Its pathway is glycan biosynthesis; glycogen biosynthesis. In terms of biological role, synthesizes alpha-1,4-glucan chains using ADP-glucose. The protein is Glycogen synthase of Bordetella petrii (strain ATCC BAA-461 / DSM 12804 / CCUG 43448).